Reading from the N-terminus, the 399-residue chain is MKVIAVDKVVLAFSGGLDTSVCIKLLEEKYNMEVITACVDVGQPRDEIERPAMVAKELGNYRHYTVDARREFAEDYIFPAIKANAVYEGYPLSTALARPLIAKKIVEVAEKEGASAIAHGCTGKGNDQFRFEAVIRSTTDLDVIAPIRDLNLTRTEEMEYARSCGIPLPSDKLYSIDENLWGRAIEGDILEDPMVEPPEDAFEWTKPIHETPEDPEVIEIGFHGGVPVALNGEELEPVELIGLANEVAGKHGIGRVDIMEDRIIGMKSREIYETPAAFLLLEAHRGLEQLTLTRSELRFADIISSTYAELVYSGLWHDPLREDLDMAVNHMQRRVTGTVRVKLHRGSMRVIGRESPYSLYSEEIVSFEDKTLDQREMAGMVKNYALQAAIYSRVCRKEN.

Ala12 to Ser20 contacts ATP. Tyr90 provides a ligand contact to L-citrulline. Gly120 serves as a coordination point for ATP. L-aspartate is bound by residues Thr122, Asn126, and Asp127. L-citrulline is bound at residue Asn126. 4 residues coordinate L-citrulline: Arg130, Ser175, Glu260, and Tyr272.

The protein belongs to the argininosuccinate synthase family. Type 1 subfamily. As to quaternary structure, homotetramer.

It is found in the cytoplasm. The catalysed reaction is L-citrulline + L-aspartate + ATP = 2-(N(omega)-L-arginino)succinate + AMP + diphosphate + H(+). The protein operates within amino-acid biosynthesis; L-arginine biosynthesis; L-arginine from L-ornithine and carbamoyl phosphate: step 2/3. In Methanothermobacter thermautotrophicus (strain ATCC 29096 / DSM 1053 / JCM 10044 / NBRC 100330 / Delta H) (Methanobacterium thermoautotrophicum), this protein is Argininosuccinate synthase.